The chain runs to 235 residues: Protein CIST1 (235 aa).

The N-terminal stretch at 1–31 (MASSQPPLPPPPPPLLLLALLLLLKVSDTSS) is a signal peptide. Composition is skewed to low complexity over residues 28–61 (DTSS…SSPT) and 76–110 (STSH…SQPE). The disordered stretch occupies residues 28–159 (DTSSSVSTAT…TGPPSVSLAT (132 aa)). Residues 32–184 (SVSTATSTAS…GVPRLHRNPG (153 aa)) lie on the Extracellular side of the membrane. Asn-45 is a glycosylation site (N-linked (GlcNAc...) asparagine). Over residues 114-136 (HPSSGSPSSEHTVTSPSLGSVSL) the composition is skewed to polar residues. The helical transmembrane segment at 185–205 (VVVAVCLLVSALLIGGAIMAV) threads the bilayer. Residues 206–235 (RRCHNGVSEFQKLDEGLVSRRSSSAHHTLP) lie on the Cytoplasmic side of the membrane.

In terms of tissue distribution, highly expressed in large intestine, small intestine, rumen, and kidney tissues.

It is found in the membrane. The polypeptide is Protein CIST1 (CIST1) (Bos taurus (Bovine)).